We begin with the raw amino-acid sequence, 244 residues long: Krueppel-like factor 9 (244 aa).

Disordered stretches follow at residues 24–51 (VPEH…GDPG) and 79–143 (PSVC…EKRH). The segment covering 32-51 (DAERLRLPEREVTKEHGDPG) has biased composition (basic and acidic residues). At S122 the chain carries Phosphoserine. Basic residues predominate over residues 134–143 (KGKHASEKRH). 3 C2H2-type zinc fingers span residues 143–167 (HKCP…YRVH), 173–197 (FPCT…YRTH), and 203–225 (FRCP…ARRH).

Belongs to the Sp1 C2H2-type zinc-finger protein family. In terms of assembly, interacts with ZZEF1.

The protein localises to the nucleus. In terms of biological role, transcription factor that binds to GC box promoter elements. Selectively activates mRNA synthesis from genes containing tandem repeats of GC boxes but represses genes with a single GC box. Acts as an epidermal circadian transcription factor regulating keratinocyte proliferation. The protein is Krueppel-like factor 9 (Klf9) of Rattus norvegicus (Rat).